We begin with the raw amino-acid sequence, 367 residues long: Heme A synthase (367 aa).

Helical transmembrane passes span 26 to 46 (IRGW…VGGA), 111 to 131 (LLAR…WLTG), 139 to 159 (LPLL…WWMV), 174 to 194 (LATH…IYRG), and 212 to 232 (AGII…VAGL). His-274 contacts heme. A run of 3 helical transmembrane segments spans residues 276-296 (AGAY…LRAA), 305-325 (SVLL…TLLL), and 327-347 (VPIV…GFAI). A heme-binding site is contributed by His-335.

It belongs to the COX15/CtaA family. Type 2 subfamily. Interacts with CtaB. The cofactor is heme b.

The protein localises to the cell membrane. It carries out the reaction Fe(II)-heme o + 2 A + H2O = Fe(II)-heme a + 2 AH2. It functions in the pathway porphyrin-containing compound metabolism; heme A biosynthesis; heme A from heme O: step 1/1. Its function is as follows. Catalyzes the conversion of heme O to heme A by two successive hydroxylations of the methyl group at C8. The first hydroxylation forms heme I, the second hydroxylation results in an unstable dihydroxymethyl group, which spontaneously dehydrates, resulting in the formyl group of heme A. This chain is Heme A synthase, found in Sinorhizobium fredii (strain NBRC 101917 / NGR234).